The following is a 208-amino-acid chain: uncharacterized protein (208 aa).

Disordered stretches follow at residues 74 to 117 and 181 to 208; these read FEYK…RDSP and ESKL…RKFK. The segment covering 184 to 208 has biased composition (polar residues); the sequence is LGSSEDSGTDRFSSNTSGSSGRKFK.

This is an uncharacterized protein from Mus musculus (Mouse).